Here is an 80-residue protein sequence, read N- to C-terminus: MAIFKSISNSTGSMGSSIGFSSKDGFSSNDNSISCFDGGGGGGGLGGWGGIGGFNVGCGGSNANIINIDIDIGRRHRRCC.

It belongs to the UPF0512 family.

The chain is UPF0512 protein J from Dictyostelium discoideum (Social amoeba).